The sequence spans 642 residues: Pentatricopeptide repeat-containing protein At3g16010 (642 aa).

PPR repeat units lie at residues 125–159, 161–195, 196–230, 232–266, 267–301, 302–336, 337–371, 372–407, 408–442, 443–473, 478–512, 513–547, 548–582, and 583–617; these read DCSTYMTLIRCLEEARLYGEMYRTIQEVVRNTYVS, SPAVLSELVKALGRAKMVSKALSVFYQAKGRKCKP, TSSTYNSVILMLMQEGQHEKVHEVYTEMCNEGDCF, DTITYSALISSYEKLGRNDSAIRLFDEMKDNCMQP, TEKIYTTLLGIYFKVGKVEKALDLFEEMKRAGCSP, TVYTYTELIKGLGKAGRVDEAYGFYKDMLRDGLTP, DVVFLNNLMNILGKVGRVEELTNVFSEMGMWRCTP, TVVSYNTVIKALFESKAHVSEVSSWFDKMKADSVSP, SEFTYSILIDGYCKTNRVEKALLLLEEMDEKGFPP, CPAAYCSLINALGKAKRYEAANELFKELKEN, SSRVYAVMIKHFGKCGKLSEAVDLFNEMKNQGSGP, DVYAYNALMSGMVKAGMINEANSLLRKMEENGCRA, DINSHNIILNGFARTGVPRRAIEMFETIKHSGIKP, and DGVTYNTLLGCFAHAGMFEEAARMMREMKDKGFEY.

This sequence belongs to the PPR family. P subfamily.

This Arabidopsis thaliana (Mouse-ear cress) protein is Pentatricopeptide repeat-containing protein At3g16010.